The following is a 582-amino-acid chain: Protein bps2 (582 aa).

An ATP-binding site is contributed by 28–35; it reads APNAYGKT. Residues 243 to 281 adopt a coiled-coil conformation; the sequence is RQSYERQLQEINAQLQKITAQRNEAEIEIRLLEKVLDQI. The region spanning 243–351 is the Zinc-hook domain; sequence RQSYERQLQE…KLKELDQISS (109 aa). Zn(2+) contacts are provided by Cys-292 and Cys-295. Positions 320-351 form a coiled coil; it reads SLYAGIKKEADELLSKKSEIEKKLKELDQISS.

The polypeptide is Protein bps2 (bps2) (Acidianus ambivalens (Desulfurolobus ambivalens)).